We begin with the raw amino-acid sequence, 254 residues long: Putative hydro-lyase SACE_1553 (254 aa).

It belongs to the D-glutamate cyclase family.

The sequence is that of Putative hydro-lyase SACE_1553 from Saccharopolyspora erythraea (strain ATCC 11635 / DSM 40517 / JCM 4748 / NBRC 13426 / NCIMB 8594 / NRRL 2338).